We begin with the raw amino-acid sequence, 210 residues long: MSKLKIDTKRRFSLLIALVLIISLSSCATTQTNVTAITTKTVFNQETTYHNLLKLKKWQANGVIGIIYDNQAESANYTYLQDGDNFSIKLYGPLGIGSIEIKGDTNSVSLANSKGQKLTAKDAKTLMLEQLGWYVPVEGLKYWIKAIAIPNIRQTSELNTNNLLSKLSQNGWSISYSNYQLVDSKYPLPTKIRMSRDNLTLKIVIKSWQI.

An N-terminal signal peptide occupies residues 1-26 (MSKLKIDTKRRFSLLIALVLIISLSS). Residue cysteine 27 is the site of N-palmitoyl cysteine attachment. Cysteine 27 carries S-diacylglycerol cysteine lipidation.

Belongs to the LolB family. Monomer.

It localises to the cell outer membrane. Plays a critical role in the incorporation of lipoproteins in the outer membrane after they are released by the LolA protein. This Francisella tularensis subsp. novicida (strain U112) protein is Outer-membrane lipoprotein LolB.